The chain runs to 334 residues: MNIRPDQNRLVFSADTLKIDEAAEADRIVAGLRAQLRSLRKRGLVLGLSGGIDSSVSVALAVRAVGAKNVFCLFMPENDSDPESLRLGRLVAETFGVEAVVEDIGPTLDAMGCYQRRDAFIRELVPDYGPGWASKIVIANALEGDGYNISSLVVQDPEGKQTKLRMPPSVYLGIVAATNMKQRTRKQIEYYHADRLNFAVLGTPNRLEYDQGFFVKNGDGAADVKPIAHLYKSQVYALAGHLGIPEEIRRRPPTTDTYSLEQTQEEFYFSLPYDRMDLCLFGLNNGLSADEVGRAANLGVAQVKRVWADIAAKRKATRYLHLGPQLVQPVEEIE.

47-54 (GLSGGIDS) is a binding site for ATP. Aspartate 53 contributes to the Mg(2+) binding site. Arginine 183 contributes to the deamido-NAD(+) binding site. Position 203 (threonine 203) interacts with ATP. Glutamate 208 provides a ligand contact to Mg(2+). The deamido-NAD(+) site is built by lysine 216 and aspartate 223. 2 residues coordinate ATP: lysine 232 and threonine 254.

It belongs to the NAD synthetase family. As to quaternary structure, homodimer.

The enzyme catalyses deamido-NAD(+) + NH4(+) + ATP = AMP + diphosphate + NAD(+) + H(+). The protein operates within cofactor biosynthesis; NAD(+) biosynthesis; NAD(+) from deamido-NAD(+) (ammonia route): step 1/1. Catalyzes the ATP-dependent amidation of deamido-NAD to form NAD. Uses ammonia as a nitrogen source. The polypeptide is NH(3)-dependent NAD(+) synthetase (Rhizobium meliloti (strain 1021) (Ensifer meliloti)).